Consider the following 82-residue polypeptide: Small ribosomal subunit protein eS21y (82 aa).

The residue at position 1 (Met-1) is an N-acetylmethionine.

It belongs to the eukaryotic ribosomal protein eS21 family.

The chain is Small ribosomal subunit protein eS21y (RPS21C) from Arabidopsis thaliana (Mouse-ear cress).